Reading from the N-terminus, the 879-residue chain is Alanine--tRNA ligase (879 aa).

Zn(2+) contacts are provided by histidine 566, histidine 570, cysteine 668, and histidine 672.

It belongs to the class-II aminoacyl-tRNA synthetase family. Zn(2+) is required as a cofactor.

The protein resides in the cytoplasm. It catalyses the reaction tRNA(Ala) + L-alanine + ATP = L-alanyl-tRNA(Ala) + AMP + diphosphate. In terms of biological role, catalyzes the attachment of alanine to tRNA(Ala) in a two-step reaction: alanine is first activated by ATP to form Ala-AMP and then transferred to the acceptor end of tRNA(Ala). Also edits incorrectly charged Ser-tRNA(Ala) and Gly-tRNA(Ala) via its editing domain. This Clostridium perfringens (strain ATCC 13124 / DSM 756 / JCM 1290 / NCIMB 6125 / NCTC 8237 / Type A) protein is Alanine--tRNA ligase.